Here is a 263-residue protein sequence, read N- to C-terminus: Chymotrypsinogen B2 (263 aa).

A signal peptide spans 1 to 18 (MAFLWLLSCWALLGTTFG). 5 cysteine pairs are disulfide-bonded: Cys-19–Cys-140, Cys-60–Cys-76, Cys-154–Cys-219, Cys-186–Cys-200, and Cys-209–Cys-238. One can recognise a Peptidase S1 domain in the interval 34–261 (IVNGEDAVPG…LIPWVQKILA (228 aa)). Catalysis depends on charge relay system residues His-75 and Asp-120. Ser-213 serves as the catalytic Charge relay system.

It belongs to the peptidase S1 family.

Its subcellular location is the secreted. It localises to the extracellular space. It carries out the reaction Preferential cleavage: Tyr-|-Xaa, Trp-|-Xaa, Phe-|-Xaa, Leu-|-Xaa.. The chain is Chymotrypsinogen B2 (CTRB2) from Homo sapiens (Human).